The following is a 401-amino-acid chain: Decapping and exoribonuclease protein (401 aa).

Residues 1–27 are disordered; sequence MEGNKSMQREKIDRPMKRGPEQNSLSP. A compositionally biased stretch (basic and acidic residues) spans 7 to 20; the sequence is MQREKIDRPMKRGP. Residues arginine 69, glutamate 114, and 149-151 contribute to the substrate site; that span reads WRG. Residue glutamate 210 participates in Mg(2+) binding. Positions 235 and 252 each coordinate substrate. Mg(2+)-binding residues include glutamate 252, aspartate 254, glutamate 271, and leucine 272. Substrate-binding residues include lysine 273 and glutamine 298.

The protein belongs to the DXO/Dom3Z family. Requires Mg(2+) as cofactor.

It is found in the nucleus. The catalysed reaction is a 5'-end triphospho-ribonucleoside in mRNA + H2O = a 5'-end phospho-ribonucleoside in mRNA + diphosphate + H(+). The enzyme catalyses a 5'-end NAD(+)-phospho-ribonucleoside in mRNA + H2O = a 5'-end phospho-ribonucleoside in mRNA + NAD(+) + H(+). It carries out the reaction a 5'-end NAD(+)-phospho-ribonucleoside in snoRNA + H2O = a 5'-end phospho-ribonucleoside in snoRNA + NAD(+) + H(+). It catalyses the reaction a 5'-end (N(7)-methyl 5'-triphosphoguanosine)-ribonucleoside-ribonucleotide in mRNA + H2O = a (N(7)-methyl 5'-triphosphoguanosine)-nucleoside + a 5'-end phospho-ribonucleoside in mRNA + H(+). The catalysed reaction is a 5'-end FAD-phospho-ribonucleoside in mRNA + H2O = a 5'-end phospho-ribonucleoside in mRNA + FAD + H(+). The enzyme catalyses a 5'-end CoA-ribonucleoside in mRNA + H2O = 3'-dephospho-CoA + a 5'-end phospho-ribonucleoside in mRNA + H(+). In terms of biological role, decapping enzyme for NAD-capped RNAs: specifically hydrolyzes the nicotinamide adenine dinucleotide (NAD) cap from a subset of RNAs by removing the entire NAD moiety from the 5'-end of an NAD-capped RNA. The NAD-cap is present at the 5'-end of some RNAs and snoRNAs. In contrast to the canonical 5'-end N7 methylguanosine (m7G) cap, the NAD cap promotes mRNA decay. Also acts as a non-canonical decapping enzyme that removes the entire cap structure of m7G capped or incompletely capped RNAs and mediates their subsequent degradation. Specifically degrades pre-mRNAs with a defective 5'-end m7G cap and is part of a pre-mRNA capping quality control. Has decapping activity toward incomplete 5'-end m7G cap mRNAs such as unmethylated 5'-end-capped RNA (cap0), while it has no activity toward 2'-O-ribose methylated m7G cap (cap1). Also has 5'-3' exoribonuclease activities: The 5'-end monophosphate RNA is then degraded by the 5'-3' exoribonuclease activity, enabling this enzyme to decap and degrade incompletely capped mRNAs. Also possesses RNA 5'-pyrophosphohydrolase activity by hydrolyzing the 5'-end triphosphate to release pyrophosphates. Exhibits decapping activity towards FAD-capped RNAs. Exhibits decapping activity towards dpCoA-capped RNAs in vitro. This Xenopus laevis (African clawed frog) protein is Decapping and exoribonuclease protein.